Reading from the N-terminus, the 186-residue chain is Elongation factor P (186 aa).

This sequence belongs to the elongation factor P family.

Its subcellular location is the cytoplasm. Its pathway is protein biosynthesis; polypeptide chain elongation. Functionally, involved in peptide bond synthesis. Stimulates efficient translation and peptide-bond synthesis on native or reconstituted 70S ribosomes in vitro. Probably functions indirectly by altering the affinity of the ribosome for aminoacyl-tRNA, thus increasing their reactivity as acceptors for peptidyl transferase. The polypeptide is Elongation factor P (Prochlorococcus marinus (strain SARG / CCMP1375 / SS120)).